A 120-amino-acid polypeptide reads, in one-letter code: Large ribosomal subunit protein bL12 (120 aa).

Belongs to the bacterial ribosomal protein bL12 family. Homodimer. Part of the ribosomal stalk of the 50S ribosomal subunit. Forms a multimeric L10(L12)X complex, where L10 forms an elongated spine to which 2 to 4 L12 dimers bind in a sequential fashion. Binds GTP-bound translation factors.

In terms of biological role, forms part of the ribosomal stalk which helps the ribosome interact with GTP-bound translation factors. Is thus essential for accurate translation. This Lactobacillus helveticus (strain DPC 4571) protein is Large ribosomal subunit protein bL12.